Here is a 262-residue protein sequence, read N- to C-terminus: Transmembrane and immunoglobulin domain-containing protein 1 (262 aa).

An N-terminal signal peptide occupies residues 1–29 (MAWKSSVIMQMGRFLLLVILFLPREMTSS). In terms of domain architecture, Ig-like C2-type 1 spans 30 to 114 (VLTVNGKTEN…LGRDQSVSVS (85 aa)). Over 30 to 220 (VLTVNGKTEN…IVKDKTVGVP (191 aa)) the chain is Extracellular. An intrachain disulfide couples C54 to C103. Residues N58, N83, N118, N158, and N190 are each glycosylated (N-linked (GlcNAc...) asparagine). Residues 122–207 (PPLLSGNDFQ…KSSLKTESLD (86 aa)) form the Ig-like C2-type 2 domain. The cysteines at positions 143 and 195 are disulfide-linked. A helical transmembrane segment spans residues 221 to 241 (IEPIIAACVVIFLTLCFGLIA). The Cytoplasmic portion of the chain corresponds to 242–262 (RRKKIMKLCMKDKDPHSETAL).

As to quaternary structure, homodimer. Post-translationally, N-glycosylated.

Its subcellular location is the cell membrane. The protein resides in the cytoplasm. May control cell-cell adhesion, cell migration and proliferation, cell morphology, and protects renal epithelial cells from oxidative cell injury to promote cell survival. The polypeptide is Transmembrane and immunoglobulin domain-containing protein 1 (Homo sapiens (Human)).